A 937-amino-acid polypeptide reads, in one-letter code: MEACCCSSSSVPSASILATGAGLRRRFSPAGAGGGGRAVAVAAGRPIRASAALLAAPAPRRRGGVVVRAVFERFTERAVKAVVFSQREARGMGDETVAPHHLLLGLVAEDRSPLGFLASGVRVERAREACRAAVGKEGLAQAPVGLATDVPFSGASKRVFEAAVEFSRNMGCNFISPEHIALGLFNLNDPTTNNVLKSLGVDSSQLAKQALTRVQGELAKDGREPVGLSSFKVREKFTPGGGKSAIVKYSNKNKEKSALALFCLDLTMRASGGLIDPVIGRKDEIERVVQIICRRTKNNPILLGEAGVGKTAIAEGLAHKIANGDVPIFLVGKRILSLDVALLMAGAKERGELEARVTSLIREVRKAGDVILFIDEVHTLIGSGIAGRGSKGAGLDIANLLKPALARGELQCIASTTLDEHRLHFDKDKALARRFQPVLVNEPSQEDAVKILLGLREKYETYHKCKYTLESINAAVYLSARYIADRHLPDKAIDLIDEAGSRARMESFKRKKEEQCSILSKSPDEYWQEIRAVQNMHEVALTNKVKYSLNQNDQEDAVDIELVGEDKTSPASMLSTSTDKPSLVGSEEIARVTSLWSGIPVQQLTADERKLLVGLDDELRKRVIGQDDAVLAISKAVKRSRVGLNDPDRPIATLIFCGPTGVGKTELTKALAASYFGSESATVRLDMSEYMERHAVSKLIGSPPGYMGFGEGGTLTEAVRRKPFTVVLLDEIEKAHPDIFNILLQIFEDGHLTDSQGRRVSFKNTLIVMTSNVGSTSISNGKRSIGFQTQTDTEEKSYAAMKSLVMEELKAFFRPELLNRIDEVVVFHPLEKTQMLAILNIMLQEVKGRILALGIGLEVSDSMKDLISQHGYDKSYGARPLRRAVTQLVEDVISEAILSGQFKPGDTIMVDTDATGKPCLSRLNDQTVQLSDPTPTL.

Residues 1–80 constitute a chloroplast transit peptide; sequence MEACCCSSSS…FERFTERAVK (80 aa). Repeat regions lie at residues 81–137 and 152–217; these read AVVF…VGKE and FSGA…VQGE. The Clp R domain occupies 81-217; sequence AVVFSQREAR…KQALTRVQGE (137 aa). Residues 259-513 are i; it reads LALFCLDLTM…RMESFKRKKE (255 aa). Residues 304–311 and 658–665 contribute to the ATP site; these read GEAGVGKT and GPTGVGKT. The II stretch occupies residues 584-775; it reads VGSEEIARVT…LIVMTSNVGS (192 aa).

This sequence belongs to the ClpA/ClpB family. ClpD subfamily. In terms of tissue distribution, highly expressed in stems, culms and leaves.

The protein localises to the plastid. Its subcellular location is the chloroplast. Functionally, molecular chaperone that may interact with a ClpP-like protease involved in degradation of denatured proteins in the chloroplast. The polypeptide is Chaperone protein ClpD2, chloroplastic (CLPD2) (Oryza sativa subsp. japonica (Rice)).